A 319-amino-acid chain; its full sequence is Aliphatic sulfonates import ATP-binding protein SsuB 1 (319 aa).

One can recognise an ABC transporter domain in the interval 63–282; it reads VTLSGVSKRF…ARASAAFAAL (220 aa). 95-102 serves as a coordination point for ATP; that stretch reads GRSGCGKS.

This sequence belongs to the ABC transporter superfamily. Aliphatic sulfonates importer (TC 3.A.1.17.2) family. In terms of assembly, the complex is composed of two ATP-binding proteins (SsuB), two transmembrane proteins (SsuC) and a solute-binding protein (SsuA).

It localises to the cell inner membrane. It catalyses the reaction ATP + H2O + aliphatic sulfonate-[sulfonate-binding protein]Side 1 = ADP + phosphate + aliphatic sulfonateSide 2 + [sulfonate-binding protein]Side 1.. In terms of biological role, part of the ABC transporter complex SsuABC involved in aliphatic sulfonates import. Responsible for energy coupling to the transport system. The sequence is that of Aliphatic sulfonates import ATP-binding protein SsuB 1 from Burkholderia lata (strain ATCC 17760 / DSM 23089 / LMG 22485 / NCIMB 9086 / R18194 / 383).